The following is a 671-amino-acid chain: UvrABC system protein B (671 aa).

The Helicase ATP-binding domain maps to 26–183 (EGLENGLAHQ…RRLSELQYSR (158 aa)). ATP is bound at residue 39-46 (GVTGSGKT). The Beta-hairpin signature appears at 92 to 115 (YYDYYQPEAYVPSSDTFIEKDASV). The region spanning 431–593 (QVDDLLSEIR…IIPQGLNKKI (163 aa)) is the Helicase C-terminal domain. The UVR domain occupies 631-666 (DQKIRELEAKMYTYAQNLEFEQAAELRDQVHQLRQQ).

It belongs to the UvrB family. Forms a heterotetramer with UvrA during the search for lesions. Interacts with UvrC in an incision complex.

It localises to the cytoplasm. Functionally, the UvrABC repair system catalyzes the recognition and processing of DNA lesions. A damage recognition complex composed of 2 UvrA and 2 UvrB subunits scans DNA for abnormalities. Upon binding of the UvrA(2)B(2) complex to a putative damaged site, the DNA wraps around one UvrB monomer. DNA wrap is dependent on ATP binding by UvrB and probably causes local melting of the DNA helix, facilitating insertion of UvrB beta-hairpin between the DNA strands. Then UvrB probes one DNA strand for the presence of a lesion. If a lesion is found the UvrA subunits dissociate and the UvrB-DNA preincision complex is formed. This complex is subsequently bound by UvrC and the second UvrB is released. If no lesion is found, the DNA wraps around the other UvrB subunit that will check the other stand for damage. The polypeptide is UvrABC system protein B (Yersinia pestis bv. Antiqua (strain Antiqua)).